We begin with the raw amino-acid sequence, 1302 residues long: Cingulin-like protein 1 (1302 aa).

The interval 1-554 (MELYFGEYQH…ELTQQTNEET (554 aa)) is head. The ZIM motif lies at 37 to 51 (AGSYGVSIRVQGIDG). The interval 75-104 (PFPPPVINNLPLHSSNGSVPKENSEELQLP) is disordered. A phosphoserine mark is found at serine 112 and serine 202. Disordered regions lie at residues 186–209 (KKPW…EDPA), 251–305 (FTSG…TPTS), and 364–392 (PGLQ…VDSA). Residues 195–204 (PSNSQPTSPS) show a composition bias toward polar residues. The span at 264 to 282 (AHPETKKTRPDVLPFRRQD) shows a compositional bias: basic and acidic residues. Phosphoserine is present on residues serine 283, serine 297, and serine 298. Positions 296–305 (SSSSSTTPTS) are enriched in low complexity. Residues 366 to 377 (LQRRGRSGKRNR) show a composition bias toward basic residues. Over residues 378–388 (INTDDRKRSRS) the composition is skewed to basic and acidic residues. Phosphoserine occurs at positions 388, 391, and 486. Residues 604-1258 (NSTSEVKDLL…QLNSMKKDLR (655 aa)) adopt a coiled-coil conformation. The span at 655–664 (RSQHNEKVEE) shows a compositional bias: basic and acidic residues. The interval 655–675 (RSQHNEKVEENSTLQQRLEES) is disordered. Serine 708 carries the phosphoserine modification. Disordered stretches follow at residues 903–929 (AAQG…SEQK) and 1263–1287 (PSKV…YEAP). Over residues 917 to 929 (QLSEKLKEESEQK) the composition is skewed to basic and acidic residues. Residues 1263-1302 (PSKVLDDMDDDDDLSTDGGSLYEAPVSYTFSKDSTVASQI) form a tail region.

The protein belongs to the cingulin family. As to quaternary structure, homodimer or oligomer. Interacts with CD2AP and SH3BP1; probably part of a complex at cell junctions. Smooth muscle, spleen, testis, fetal brain, amygdala, corpus callosum, cerebellum, thalamus and subthalamic nucleus of adult brain.

The protein resides in the cell junction. The protein localises to the tight junction. Its function is as follows. May be involved in anchoring the apical junctional complex, especially tight junctions, to actin-based cytoskeletons. This Homo sapiens (Human) protein is Cingulin-like protein 1 (CGNL1).